The primary structure comprises 546 residues: NAD(P)H-quinone oxidoreductase chain 4 (546 aa).

Helical transmembrane passes span 24–44 (FPWL…IPFF), 56–76 (FALS…INGF), 108–128 (MPLI…AWPV), 132–152 (PKLF…VFAV), 156–176 (LLFF…LAIW), 188–208 (FIIY…AMGF), 232–252 (ILCY…VPLH), 263–283 (TAPV…YALL), 297–317 (FSPL…LTSF), 326–346 (IAYS…SFSS), 352–372 (AMLQ…LVGA), 396–416 (FALW…SGFV), 437–457 (VIMA…LLSM), and 484–504 (IYII…PRLV).

It belongs to the complex I subunit 4 family.

The protein resides in the cellular thylakoid membrane. The catalysed reaction is a plastoquinone + NADH + (n+1) H(+)(in) = a plastoquinol + NAD(+) + n H(+)(out). It catalyses the reaction a plastoquinone + NADPH + (n+1) H(+)(in) = a plastoquinol + NADP(+) + n H(+)(out). In terms of biological role, NDH-1 shuttles electrons from NAD(P)H, via FMN and iron-sulfur (Fe-S) centers, to quinones in the respiratory chain. The immediate electron acceptor for the enzyme in this species is believed to be plastoquinone. Couples the redox reaction to proton translocation (for every two electrons transferred, four hydrogen ions are translocated across the cytoplasmic membrane), and thus conserves the redox energy in a proton gradient. This is NAD(P)H-quinone oxidoreductase chain 4 from Prochlorococcus marinus subsp. pastoris (strain CCMP1986 / NIES-2087 / MED4).